We begin with the raw amino-acid sequence, 179 residues long: Large ribosomal subunit protein uL5 (179 aa).

The protein belongs to the universal ribosomal protein uL5 family. As to quaternary structure, part of the 50S ribosomal subunit; part of the 5S rRNA/L5/L18/L25 subcomplex. Contacts the 5S rRNA and the P site tRNA. Forms a bridge to the 30S subunit in the 70S ribosome.

In terms of biological role, this is one of the proteins that bind and probably mediate the attachment of the 5S RNA into the large ribosomal subunit, where it forms part of the central protuberance. In the 70S ribosome it contacts protein S13 of the 30S subunit (bridge B1b), connecting the 2 subunits; this bridge is implicated in subunit movement. Contacts the P site tRNA; the 5S rRNA and some of its associated proteins might help stabilize positioning of ribosome-bound tRNAs. The chain is Large ribosomal subunit protein uL5 from Dictyoglomus turgidum (strain DSM 6724 / Z-1310).